Here is a 107-residue protein sequence, read N- to C-terminus: Replication initiation control protein YabA (107 aa).

Residues H81, C83, C97, and C100 each contribute to the Zn(2+) site.

Belongs to the YabA family. As to quaternary structure, homotetramer. Interacts with both DnaA and DnaN, acting as a bridge between these two proteins. The cofactor is Zn(2+).

The protein resides in the cytoplasm. The protein localises to the nucleoid. Its function is as follows. Involved in control of chromosome replication initiation. Inhibits the cooperative binding of DnaA to the oriC region, thus negatively regulating initiation of chromosome replication. Inhibits the ability of DnaA-ATP to form a helix on DNA; does not disassemble preformed DnaA-DNA helices. Decreases the residence time of DnaA on the chromosome at its binding sites (oriC, replication forks and promoter-binding sites). Tethers DnaA to the replication machinery via the DNA polymerase beta sliding clamp subunit (dnaN). Associates with oriC and other DnaA targets on the chromosome in a DnaA-dependent manner. The protein is Replication initiation control protein YabA of Streptococcus equi subsp. zooepidemicus (strain MGCS10565).